We begin with the raw amino-acid sequence, 312 residues long: Protoheme IX farnesyltransferase (312 aa).

The next 8 membrane-spanning stretches (helical) occupy residues 12–32, 41–61, 93–113, 114–134, 141–161, 168–188, 240–260, and 290–310; these read LALT…PAML, FGLI…ANTF, VFAW…CHSW, LAAG…TKWL, NVIW…AVIT, FHAG…IFFW, VPAA…WFII, and ILFV…AHAV.

This sequence belongs to the UbiA prenyltransferase family. Protoheme IX farnesyltransferase subfamily.

It is found in the cell membrane. The enzyme catalyses heme b + (2E,6E)-farnesyl diphosphate + H2O = Fe(II)-heme o + diphosphate. Its pathway is porphyrin-containing compound metabolism; heme O biosynthesis; heme O from protoheme: step 1/1. Functionally, converts heme B (protoheme IX) to heme O by substitution of the vinyl group on carbon 2 of heme B porphyrin ring with a hydroxyethyl farnesyl side group. The sequence is that of Protoheme IX farnesyltransferase from Corynebacterium jeikeium (strain K411).